The primary structure comprises 1241 residues: Putative urea carboxylase (1241 aa).

The 457-residue stretch at 3–459 folds into the Biotin carboxylation domain; that stretch reads ALKTLLIANR…LTKFLNNFEY (457 aa). Residues Lys-117 and Glu-201 each contribute to the ATP site. The region spanning 121 to 321 is the ATP-grasp domain; it reads RELATKAGVP…LVELMLRQAD (201 aa). Positions 1159 to 1239 constitute a Biotinyl-binding domain; the sequence is EELLKDPEIT…EAGKPLMLVR (81 aa). An N6-biotinyllysine modification is found at Lys-1202.

The cofactor is biotin.

The catalysed reaction is urea + hydrogencarbonate + ATP = urea-1-carboxylate + ADP + phosphate + H(+). Involved in the utilization of lactams. Required for the conversion of exogenous 2-pyrrolidinone (gamma-butyrolactam) to endogenous gamma-amino-n-butyrate (GABA). This is Putative urea carboxylase (lamA) from Emericella nidulans (strain FGSC A4 / ATCC 38163 / CBS 112.46 / NRRL 194 / M139) (Aspergillus nidulans).